The sequence spans 504 residues: Deoxyguanosinetriphosphate triphosphohydrolase (504 aa).

An HD domain is found at R66–C273.

It belongs to the dGTPase family. Type 1 subfamily. As to quaternary structure, homotetramer. Requires Mg(2+) as cofactor.

It catalyses the reaction dGTP + H2O = 2'-deoxyguanosine + triphosphate + H(+). Its function is as follows. dGTPase preferentially hydrolyzes dGTP over the other canonical NTPs. This chain is Deoxyguanosinetriphosphate triphosphohydrolase, found in Enterobacter sp. (strain 638).